The chain runs to 492 residues: Probable cytosol aminopeptidase (492 aa).

Residues Lys259 and Asp264 each coordinate Mn(2+). The active site involves Lys271. Mn(2+) contacts are provided by Asp283, Asp342, and Glu344. The active site involves Arg346.

It belongs to the peptidase M17 family. Requires Mn(2+) as cofactor.

The protein localises to the cytoplasm. The catalysed reaction is Release of an N-terminal amino acid, Xaa-|-Yaa-, in which Xaa is preferably Leu, but may be other amino acids including Pro although not Arg or Lys, and Yaa may be Pro. Amino acid amides and methyl esters are also readily hydrolyzed, but rates on arylamides are exceedingly low.. The enzyme catalyses Release of an N-terminal amino acid, preferentially leucine, but not glutamic or aspartic acids.. Functionally, presumably involved in the processing and regular turnover of intracellular proteins. Catalyzes the removal of unsubstituted N-terminal amino acids from various peptides. This Synechocystis sp. (strain ATCC 27184 / PCC 6803 / Kazusa) protein is Probable cytosol aminopeptidase (pepA).